Consider the following 235-residue polypeptide: Small ribosomal subunit protein uS3 (235 aa).

Positions 39–107 (VRKFLNKELA…PAQINIAEVK (69 aa)) constitute a KH type-2 domain.

It belongs to the universal ribosomal protein uS3 family. In terms of assembly, part of the 30S ribosomal subunit. Forms a tight complex with proteins S10 and S14.

Its function is as follows. Binds the lower part of the 30S subunit head. Binds mRNA in the 70S ribosome, positioning it for translation. The polypeptide is Small ribosomal subunit protein uS3 (Actinobacillus pleuropneumoniae serotype 5b (strain L20)).